Here is a 160-residue protein sequence, read N- to C-terminus: Phosphopantetheine adenylyltransferase (160 aa).

This sequence belongs to the eukaryotic CoaD family.

The protein localises to the cytoplasm. It carries out the reaction (R)-4'-phosphopantetheine + ATP + H(+) = 3'-dephospho-CoA + diphosphate. The protein operates within cofactor biosynthesis; coenzyme A biosynthesis. Reversibly transfers an adenylyl group from ATP to 4'-phosphopantetheine, yielding dephospho-CoA (dPCoA) and pyrophosphate. This is Phosphopantetheine adenylyltransferase from Pyrococcus furiosus (strain ATCC 43587 / DSM 3638 / JCM 8422 / Vc1).